We begin with the raw amino-acid sequence, 460 residues long: MDKMWSGRFSATASSLLDQFNASIMFDRKLYREDIEGSIAHATMLAKQGILTTDELSQITKGLSQVKEEIESGVFEWKISDEDLHMGIEKRLTAIIGDAGKKLHTARSRNDQVAVDFRRYVLRKNLEIVDALKLLMNEILVIASKHTQTLLPGMTHLQHAQPINFAFHLSAYLSMFKRDIERFESSYKRNNISPLGCAALAGTPHKIDRDMTAELLGFESASINCLDTVSDRDFALEILFNISTMMMHISRLSEELVMWSSYEFRFVELSDEYSTGSSIMPQKKNPDVPELLRGKTGRVYGSLMGLLTVMKALPLAYNKDTQEDKEGVFDAVETAEISLEILKEALKTMQVKPHYMKNACKIGHLSATDLADYLVQKCDIPFREAHFITGKAVAKSEELKIDLSDIELKYLKEIDDRINEDVLAFLSIENSMNARTSAGGTSTKRTEEQLKYFENFLKAE.

It belongs to the lyase 1 family. Argininosuccinate lyase subfamily.

It is found in the cytoplasm. It catalyses the reaction 2-(N(omega)-L-arginino)succinate = fumarate + L-arginine. It functions in the pathway amino-acid biosynthesis; L-arginine biosynthesis; L-arginine from L-ornithine and carbamoyl phosphate: step 3/3. This Sulfurimonas denitrificans (strain ATCC 33889 / DSM 1251) (Thiomicrospira denitrificans (strain ATCC 33889 / DSM 1251)) protein is Argininosuccinate lyase.